A 287-amino-acid chain; its full sequence is MSTYTTRSIGAPNTLDYKVYIEKDGKPVSAFHDIPLYANAEKTILNMIVEVPRWTNAKMEISKDLALNPIIQDTKKGKLRFVRNCFPHHGYIHNYGAFPQTWEDPNHVHPETKAKGDNDPLDVCEIGETVGYTGQVKQVKVLGVMALLDEGETDWKIIAIDVKDPLASKVNDIEDVERHLPGLLRATNEWFRIYKIPDGKPENQFAFSGECKNKKYADEVIRECEEAWETLIAGKASDDKGISLENTTLENTPTFTASASIPEGQNLAPAPIDQSIDKWFYISGASV.

Arg80 serves as a coordination point for diphosphate. Asp117, Asp122, and Asp154 together coordinate Mg(2+).

This sequence belongs to the PPase family. The cofactor is Mg(2+).

It localises to the cytoplasm. It catalyses the reaction diphosphate + H2O = 2 phosphate + H(+). In Yarrowia lipolytica (strain CLIB 122 / E 150) (Yeast), this protein is Inorganic pyrophosphatase (IPP1).